Here is a 370-residue protein sequence, read N- to C-terminus: 4-hydroxy-3-methylbut-2-en-1-yl diphosphate synthase (flavodoxin) (370 aa).

[4Fe-4S] cluster is bound by residues cysteine 265, cysteine 268, cysteine 300, and glutamate 307.

It belongs to the IspG family. The cofactor is [4Fe-4S] cluster.

It catalyses the reaction (2E)-4-hydroxy-3-methylbut-2-enyl diphosphate + oxidized [flavodoxin] + H2O + 2 H(+) = 2-C-methyl-D-erythritol 2,4-cyclic diphosphate + reduced [flavodoxin]. It functions in the pathway isoprenoid biosynthesis; isopentenyl diphosphate biosynthesis via DXP pathway; isopentenyl diphosphate from 1-deoxy-D-xylulose 5-phosphate: step 5/6. Its function is as follows. Converts 2C-methyl-D-erythritol 2,4-cyclodiphosphate (ME-2,4cPP) into 1-hydroxy-2-methyl-2-(E)-butenyl 4-diphosphate. The polypeptide is 4-hydroxy-3-methylbut-2-en-1-yl diphosphate synthase (flavodoxin) (Symbiobacterium thermophilum (strain DSM 24528 / JCM 14929 / IAM 14863 / T)).